A 591-amino-acid chain; its full sequence is MGTARIAPSLALLLCCPVLSSAYALVDADDVFTKEEQIFLLHRAQAQCDKLLKEVLHTAANIMESDKGWTPASTSGKPRKEKAPGKFYPESKENKDVPTGSRRRGRPCLPEWDNIVCWPLGAPGEVVAVPCPDYIYDFNHKGHAYRRCDRNGSWEVVPGHNRTWANYSECLKFMTNETREREVFDRLGMIYTVGYSMSLASLTVAVLILAYFRRLHCTRNYIHMHMFLSFMLRAASIFVKDAVLYSGFTLDEAERLTEEELHIIAQVPPPPAAAAVGYAGCRVAVTFFLYFLATNYYWILVEGLYLHSLIFMAFFSEKKYLWGFTIFGWGLPAVFVAVWVGVRATLANTGCWDLSSGHKKWIIQVPILASVVLNFILFINIIRVLATKLRETNAGRCDTRQQYRKLLRSTLVLVPLFGVHYTVFMALPYTEVSGTLWQIQMHYEMLFNSFQGFFVAIIYCFCNGEVQAEIRKSWSRWTLALDFKRKARSGSSSYSYGPMVSHTSVTNVGPRAGLSLPLSPRLLPATTNGHSQLPGHAKPGAPAIENETIPVTMTVPKDDGFLNGSCSGLDEEASGSARPPPLLQEEWETVM.

The first 26 residues, 1-26, serve as a signal peptide directing secretion; that stretch reads MGTARIAPSLALLLCCPVLSSAYALV. Residues 27 to 188 lie on the Extracellular side of the membrane; sequence DADDVFTKEE…REREVFDRLG (162 aa). Cystine bridges form between cysteine 48/cysteine 117, cysteine 108/cysteine 148, and cysteine 131/cysteine 170. Residues 67-104 are disordered; the sequence is KGWTPASTSGKPRKEKAPGKFYPESKENKDVPTGSRRR. A compositionally biased stretch (basic and acidic residues) spans 81 to 96; it reads EKAPGKFYPESKENKD. Asparagine 151, asparagine 161, asparagine 166, and asparagine 176 each carry an N-linked (GlcNAc...) asparagine glycan. Residues 189 to 212 form a helical membrane-spanning segment; it reads MIYTVGYSMSLASLTVAVLILAYF. At 213 to 219 the chain is on the cytoplasmic side; it reads RRLHCTR. Residues 220 to 239 traverse the membrane as a helical segment; the sequence is NYIHMHMFLSFMLRAASIFV. The Extracellular segment spans residues 240-282; that stretch reads KDAVLYSGFTLDEAERLTEEELHIIAQVPPPPAAAAVGYAGCR. Residues 283-306 form a helical membrane-spanning segment; it reads VAVTFFLYFLATNYYWILVEGLYL. Over 307–320 the chain is Cytoplasmic; that stretch reads HSLIFMAFFSEKKY. The chain crosses the membrane as a helical span at residues 321 to 342; that stretch reads LWGFTIFGWGLPAVFVAVWVGV. At 343–361 the chain is on the extracellular side; that stretch reads RATLANTGCWDLSSGHKKW. A helical transmembrane segment spans residues 362 to 382; it reads IIQVPILASVVLNFILFINII. The Cytoplasmic segment spans residues 383–409; sequence RVLATKLRETNAGRCDTRQQYRKLLRS. The chain crosses the membrane as a helical span at residues 410–428; it reads TLVLVPLFGVHYTVFMALP. Over 429-440 the chain is Extracellular; the sequence is YTEVSGTLWQIQ. Residues 441–463 form a helical membrane-spanning segment; it reads MHYEMLFNSFQGFFVAIIYCFCN. At 464–591 the chain is on the cytoplasmic side; the sequence is GEVQAEIRKS…LLQEEWETVM (128 aa). The Important for interaction with G proteins signature appears at 474 to 477; the sequence is WSRW.

Belongs to the G-protein coupled receptor 2 family. Homodimer in the absence of bound ligand. Peptide hormone binding leads to dissociation of the homodimer. N-glycosylated. As to expression, detected in kidney.

The protein localises to the cell membrane. Functionally, G-protein-coupled receptor for parathyroid hormone (PTH) and for parathyroid hormone-related peptide (PTHLH). Ligand binding causes a conformation change that triggers signaling via guanine nucleotide-binding proteins (G proteins) and modulates the activity of downstream effectors, such as adenylate cyclase (cAMP). PTH1R is coupled to G(s) G alpha proteins and mediates activation of adenylate cyclase activity. PTHLH dissociates from PTH1R more rapidly than PTH; as consequence, the cAMP response induced by PTHLH decays faster than the response induced by PTH. In Mus musculus (Mouse), this protein is Parathyroid hormone/parathyroid hormone-related peptide receptor (Pth1r).